The primary structure comprises 868 residues: E3 ubiquitin-protein ligase TRIM71 (868 aa).

An N-acetylalanine modification is found at Ala-2. Residues 12–89 form an RING-type zinc finger; it reads CLLCKEMCGS…PLKLRCPVCD (78 aa). Residues 26–41 show a composition bias toward low complexity; sequence SSNSSASSSSSQTSTS. 2 disordered regions span residues 26–50 and 121–186; these read SSNSSASSSSSQTSTSSGGGGGGPG and ADEP…GSPS. Residues 142–153 show a composition bias toward basic residues; that stretch reads SNHRHHAHHAHP. The segment covering 159 to 176 has biased composition (pro residues); sequence APPPPLPPAPPPPAPPRS. A compositionally biased stretch (low complexity) spans 177–186; that stretch reads APGGPAGSPS. Residues 191 to 238 form a B box-type 1; atypical zinc finger; sequence RRPHGCSSCDEGNAASSRCLDCQEHLCDNCVRAHQRVRLTKDHYIERG. The B box-type 2 zinc-finger motif lies at 273-314; it reads ERLGFCQHHDDEVLHLYCDTCSVPICRECTVGRHGGHSFVYL. Zn(2+) contacts are provided by Cys-278, His-281, Cys-301, and His-306. Positions 391–427 form a coiled coil; it reads QVKAKSLYLQVEKLRQNLNKLESTISAVQQVLEEGRA. A Filamin repeat occupies 479 to 580; sequence SSGAFAPLTK…IENSPFKVVV (102 aa). NHL repeat units follow at residues 593 to 636, 640 to 683, 687 to 730, 734 to 777, 781 to 824, and 828 to 868; these read GLSF…FKPC, HHKF…FTFE, LLKF…FGPD, LNKY…IHPD, ARFL…FESN, and LCKF…ILIF.

The protein belongs to the TRIM/RBCC family. In terms of assembly, interacts (via NHL repeats) with AGO2; the interaction increases in presence of RNA. Interacts with HSP90AA1. Interacts (via NHL repeats) with MOV10, PABPC1, PUM1, PUM2, STAU2, XRN1 and XRN2 in an RNA-dependent manner. Interacts with SHCBP1; leading to enhance its stability. Post-translationally, autoubiquitinated.

It localises to the cytoplasm. Its subcellular location is the P-body. The enzyme catalyses S-ubiquitinyl-[E2 ubiquitin-conjugating enzyme]-L-cysteine + [acceptor protein]-L-lysine = [E2 ubiquitin-conjugating enzyme]-L-cysteine + N(6)-ubiquitinyl-[acceptor protein]-L-lysine.. Its pathway is protein modification; protein ubiquitination. Functionally, E3 ubiquitin-protein ligase that cooperates with the microRNAs (miRNAs) machinery and promotes embryonic stem cells proliferation and maintenance. Binds to miRNAs and associates with AGO2, participating in post-transcriptional repression of transcripts such as CDKN1A. In addition, participates in post-transcriptional mRNA repression in a miRNA independent mechanism. Facilitates the G1-S transition to promote rapid embryonic stem cell self-renewal by repressing CDKN1A expression. Required to maintain proliferation and prevent premature differentiation of neural progenitor cells during early neural development: positively regulates FGF signaling by controlling the stability of SHCBP1. Specific regulator of miRNA biogenesis. Binds to miRNA MIR29A hairpin and postranscriptionally modulates MIR29A levels, which indirectly regulates TET proteins expression. This chain is E3 ubiquitin-protein ligase TRIM71 (TRIM71), found in Bos taurus (Bovine).